Here is a 237-residue protein sequence, read N- to C-terminus: MATDWKQKCDSEWQLGAHGVPMPDTVDWKSVFETKPFERNLLQNPSPYGVNHTVPPPEPHRSGIPPPSDRPPQLEPEGNFSGWKTNTEVLPYDTSGIPPGVVICQLPQHRWFTLEQCVDLKAAGLWDQLLDDFQPEIVIEDWYEESQLHKCIYQLDVKLLGADGETVIKQHTYNPEEDLECYSHTWKKVSHVFSKYAPGVRYIHFLHRLKNQFMVEFFNTKVTDSSVIVKASKPSVK.

Residues 31 to 231 (VFETKPFERN…VTDSSVIVKA (201 aa)) form the FBA domain. The interval 40 to 82 (NLLQNPSPYGVNHTVPPPEPHRSGIPPPSDRPPQLEPEGNFSG) is disordered. Pro residues predominate over residues 64–74 (IPPPSDRPPQL).

Expressed in nonspecific cytotoxic cells (NCC).

It localises to the cytoplasm. Its function is as follows. May promote cell proliferation. In Danio rerio (Zebrafish), this protein is F-box only protein 50 (nccrp1).